The following is a 471-amino-acid chain: DENN domain-containing protein 2D (471 aa).

Residues 55–204 (EYLLVVSLKK…AFPAPGKTVT (150 aa)) enclose the uDENN domain. Residues 226-359 (HLEHVDFSSL…LQDDILDSLG (134 aa)) enclose the cDENN domain. The region spanning 361–445 (GINELKTAEQ…QEAEKSKNPP (85 aa)) is the dDENN domain.

In terms of tissue distribution, in bronchial mucosa, mainly expressed in ciliated and basal epithelial cells and weakly in alveolar cells (at protein level). Tends to be down-regulated in lung cancers, immortalized bronchial epithelial cell lines and precancerous lesions.

The protein localises to the cytoplasm. In terms of biological role, guanine nucleotide exchange factor (GEF) which may activate RAB9A and RAB9B. Promotes the exchange of GDP to GTP, converting inactive GDP-bound Rab proteins into their active GTP-bound form. The sequence is that of DENN domain-containing protein 2D (DENND2D) from Homo sapiens (Human).